A 272-amino-acid chain; its full sequence is 2-C-methyl-D-erythritol 4-phosphate cytidylyltransferase (272 aa).

This sequence belongs to the IspD/TarI cytidylyltransferase family. IspD subfamily.

The enzyme catalyses 2-C-methyl-D-erythritol 4-phosphate + CTP + H(+) = 4-CDP-2-C-methyl-D-erythritol + diphosphate. The protein operates within isoprenoid biosynthesis; isopentenyl diphosphate biosynthesis via DXP pathway; isopentenyl diphosphate from 1-deoxy-D-xylulose 5-phosphate: step 2/6. Functionally, catalyzes the formation of 4-diphosphocytidyl-2-C-methyl-D-erythritol from CTP and 2-C-methyl-D-erythritol 4-phosphate (MEP). This Xanthomonas oryzae pv. oryzae (strain MAFF 311018) protein is 2-C-methyl-D-erythritol 4-phosphate cytidylyltransferase.